Reading from the N-terminus, the 558-residue chain is Coiled-coil domain-containing protein 63 (558 aa).

Positions 1–26 (MPTKKHRRKDPESPQEPSEKTKEQLV) are disordered. A compositionally biased stretch (basic and acidic residues) spans 9–26 (KDPESPQEPSEKTKEQLV). 2 coiled-coil regions span residues 48–289 (NFRS…KAKK) and 339–416 (VTEL…VENL). Residues 531–558 (HYATRESRNRDSMPEKGDELKSKKKVTV) form a disordered region. Residues 533–551 (ATRESRNRDSMPEKGDELK) are compositionally biased toward basic and acidic residues.

Its function is as follows. Plays a role in spermiogenesis. Involved in the elongation of flagella and the formation of sperm heads. In Bos taurus (Bovine), this protein is Coiled-coil domain-containing protein 63.